We begin with the raw amino-acid sequence, 512 residues long: ATP synthase subunit alpha (512 aa).

169–176 is a binding site for ATP; the sequence is GDRQTGKT.

Belongs to the ATPase alpha/beta chains family. As to quaternary structure, F-type ATPases have 2 components, CF(1) - the catalytic core - and CF(0) - the membrane proton channel. CF(1) has five subunits: alpha(3), beta(3), gamma(1), delta(1), epsilon(1). CF(0) has three main subunits: a(1), b(2) and c(9-12). The alpha and beta chains form an alternating ring which encloses part of the gamma chain. CF(1) is attached to CF(0) by a central stalk formed by the gamma and epsilon chains, while a peripheral stalk is formed by the delta and b chains.

It localises to the cell membrane. The catalysed reaction is ATP + H2O + 4 H(+)(in) = ADP + phosphate + 5 H(+)(out). Its function is as follows. Produces ATP from ADP in the presence of a proton gradient across the membrane. The alpha chain is a regulatory subunit. This chain is ATP synthase subunit alpha, found in Buchnera aphidicola subsp. Acyrthosiphon pisum (strain Tuc7).